The following is a 217-amino-acid chain: UPF0319 protein HSM_0266 (217 aa).

Residues 1-21 (MKFSFAALASAMLLTSTAAFA) form the signal peptide.

Belongs to the UPF0319 family.

The protein is UPF0319 protein HSM_0266 of Histophilus somni (strain 2336) (Haemophilus somnus).